The following is a 393-amino-acid chain: uncharacterized protein (393 aa).

Positions 12 to 70 (APLLGSKIKLNIEKLAIGGAGVARHEGMVVFVPQAAPNEEILAEITLVKKNFMEARVVE) constitute a TRAM domain. The [4Fe-4S] cluster site is built by Cys-83, Cys-89, Cys-92, and Cys-166. 4 residues coordinate S-adenosyl-L-methionine: Gln-221, Tyr-250, Glu-273, and Asp-316. Cys-343 functions as the Nucleophile in the catalytic mechanism.

The protein belongs to the class I-like SAM-binding methyltransferase superfamily. RNA M5U methyltransferase family.

This is an uncharacterized protein from Bdellovibrio bacteriovorus (strain ATCC 15356 / DSM 50701 / NCIMB 9529 / HD100).